A 213-amino-acid polypeptide reads, in one-letter code: Small ribosomal subunit protein eS1 (213 aa).

It belongs to the eukaryotic ribosomal protein eS1 family.

The polypeptide is Small ribosomal subunit protein eS1 (Desulfurococcus amylolyticus (strain DSM 18924 / JCM 16383 / VKM B-2413 / 1221n) (Desulfurococcus kamchatkensis)).